A 150-amino-acid polypeptide reads, in one-letter code: Protein A151R (150 aa).

The protein belongs to the asfivirus A151R family. As to quaternary structure, monomer. Homodimer. Interacts with protein B119L. Interacts with membrane protein E248R. Zn(2+) serves as cofactor.

Its function is as follows. May participate in a redox cascade for the formation of disulfide bonds in viral proteins. The protein is Protein A151R of African swine fever virus (isolate Pig/Kenya/KEN-50/1950) (ASFV).